The sequence spans 85 residues: Toxin BmKaTX15 (85 aa).

Residues 1 to 19 (MNYLVFFSLALLVMTGVES) form the signal peptide. Residues 21-83 (RDGYIADDKN…VPIRVPGKCN (63 aa)) form the LCN-type CS-alpha/beta domain. Disulfide bonds link C31–C82, C35–C55, C41–C65, and C45–C67.

This sequence belongs to the long (4 C-C) scorpion toxin superfamily. Sodium channel inhibitor family. Alpha subfamily. Expressed by the venom gland.

The protein resides in the secreted. Its function is as follows. Alpha toxins bind voltage-independently at site-3 of sodium channels (Nav) and inhibit the inactivation of the activated channels, thereby blocking neuronal transmission. The protein is Toxin BmKaTX15 of Olivierus martensii (Manchurian scorpion).